A 574-amino-acid polypeptide reads, in one-letter code: Cyclomaltodextrinase (574 aa).

Residues Asn144, Asp146, Asn149, Asp150, Gly168, and Asp170 each contribute to the Ca(2+) site. Substrate-binding residues include His243 and Arg323. The Nucleophile role is filled by Asp325. The active-site Proton donor is Glu354. Substrate contacts are provided by residues 420–421 (HD), Asp465, and Arg469.

It belongs to the glycosyl hydrolase 13 family. Monomer. Ca(2+) serves as cofactor.

It carries out the reaction cyclomaltodextrin + H2O = linear maltodextrin. Its function is as follows. Hydrolyzes cyclodextrins. Can also act on linear maltodextrins, with the exception of maltose. The protein is Cyclomaltodextrinase of Thermoanaerobacter pseudethanolicus (strain ATCC 33223 / 39E) (Clostridium thermohydrosulfuricum).